A 448-amino-acid chain; its full sequence is Tubulin beta-1 chain (448 aa).

Gln-11, Glu-69, Ser-138, Gly-142, Thr-143, Gly-144, Asn-204, and Asn-226 together coordinate GTP. A Mg(2+)-binding site is contributed by Glu-69. Residues 428-448 are disordered; the sequence is AGIGDDEEEDEEGVMGEEIDA. Residues 430–448 show a composition bias toward acidic residues; the sequence is IGDDEEEDEEGVMGEEIDA.

The protein belongs to the tubulin family. In terms of assembly, dimer of alpha and beta chains. A typical microtubule is a hollow water-filled tube with an outer diameter of 25 nm and an inner diameter of 15 nM. Alpha-beta heterodimers associate head-to-tail to form protofilaments running lengthwise along the microtubule wall with the beta-tubulin subunit facing the microtubule plus end conferring a structural polarity. Microtubules usually have 13 protofilaments but different protofilament numbers can be found in some organisms and specialized cells. Mg(2+) serves as cofactor.

The protein resides in the cytoplasm. Its subcellular location is the cytoskeleton. Functionally, tubulin is the major constituent of microtubules, a cylinder consisting of laterally associated linear protofilaments composed of alpha- and beta-tubulin heterodimers. Microtubules grow by the addition of GTP-tubulin dimers to the microtubule end, where a stabilizing cap forms. Below the cap, tubulin dimers are in GDP-bound state, owing to GTPase activity of alpha-tubulin. This Echinococcus multilocularis (Fox tapeworm) protein is Tubulin beta-1 chain (TUB-1).